The chain runs to 269 residues: Putative pyruvate, phosphate dikinase regulatory protein (269 aa).

147–154 (GVSRTSKT) provides a ligand contact to ADP.

Belongs to the pyruvate, phosphate/water dikinase regulatory protein family. PDRP subfamily.

The catalysed reaction is N(tele)-phospho-L-histidyl/L-threonyl-[pyruvate, phosphate dikinase] + ADP = N(tele)-phospho-L-histidyl/O-phospho-L-threonyl-[pyruvate, phosphate dikinase] + AMP + H(+). It catalyses the reaction N(tele)-phospho-L-histidyl/O-phospho-L-threonyl-[pyruvate, phosphate dikinase] + phosphate + H(+) = N(tele)-phospho-L-histidyl/L-threonyl-[pyruvate, phosphate dikinase] + diphosphate. Functionally, bifunctional serine/threonine kinase and phosphorylase involved in the regulation of the pyruvate, phosphate dikinase (PPDK) by catalyzing its phosphorylation/dephosphorylation. This Geotalea daltonii (strain DSM 22248 / JCM 15807 / FRC-32) (Geobacter daltonii) protein is Putative pyruvate, phosphate dikinase regulatory protein.